Reading from the N-terminus, the 301-residue chain is Protoheme IX farnesyltransferase (301 aa).

The next 9 helical transmembrane spans lie at 9–29, 42–62, 89–109, 113–133, 142–162, 168–188, 211–231, 232–252, and 280–300; these read VLAY…VATI, IALI…ANSL, TSHA…WLWW, LLAG…YTMV, VVWG…AVTG, PIVL…ALAM, VTKQ…TLVP, AAGV…LLMA, and VVFV…GSLL.

The protein belongs to the UbiA prenyltransferase family. Protoheme IX farnesyltransferase subfamily.

It localises to the cell membrane. The enzyme catalyses heme b + (2E,6E)-farnesyl diphosphate + H2O = Fe(II)-heme o + diphosphate. Its pathway is porphyrin-containing compound metabolism; heme O biosynthesis; heme O from protoheme: step 1/1. In terms of biological role, converts heme B (protoheme IX) to heme O by substitution of the vinyl group on carbon 2 of heme B porphyrin ring with a hydroxyethyl farnesyl side group. This is Protoheme IX farnesyltransferase from Rhodococcus jostii (strain RHA1).